The sequence spans 86 residues: Large ribosomal subunit protein eL43 (86 aa).

Zn(2+)-binding residues include C38, C41, C56, and C59. Residues 38–59 (CPVCGRKAVRRISTGIWQCQKC) form a C4-type zinc finger.

Belongs to the eukaryotic ribosomal protein eL43 family. In terms of assembly, part of the 50S ribosomal subunit. It depends on Zn(2+) as a cofactor.

This Thermococcus kodakarensis (strain ATCC BAA-918 / JCM 12380 / KOD1) (Pyrococcus kodakaraensis (strain KOD1)) protein is Large ribosomal subunit protein eL43.